The following is an 852-amino-acid chain: Cell surface glycoprotein (852 aa).

Positions 1 to 34 (MTDTTGKLRAVLLTALMVGSVIGAGVAFTGGAAA) are cleaved as a signal peptide. Asparagine 36 carries N-linked (GalNAc...) (glycosaminoglycan) asparagine glycosylation. The disordered stretch occupies residues 84–131 (KLDNEKEVSPATLSRTGGSDEGVPLQMPIPEDQSTGSYDSNGPDNDEA). Polar residues predominate over residues 115 to 126 (DQSTGSYDSNGP). Residues asparagine 339, asparagine 398, asparagine 438, asparagine 513, asparagine 643, asparagine 727, asparagine 751, and asparagine 787 are each glycosylated (N-linked (Glc...) asparagine). Residues 772–828 (ELEEPDQTTVDQPENNQTMTTTMTETTTETTTEMTTTQENTTENGSEGTSDGESGGS) form a disordered region. The span at 785–823 (ENNQTMTTTMTETTTETTTEMTTTQENTTENGSEGTSDG) shows a compositional bias: low complexity. Residues threonine 789, threonine 791, threonine 792, threonine 793, threonine 795, threonine 797, threonine 798, threonine 799, threonine 801, threonine 802, threonine 803, threonine 806, threonine 807, and threonine 808 are each glycosylated (O-linked (Gal...) threonine). Asparagine 811 carries N-linked (Glc...) asparagine glycosylation. O-linked (Gal...) threonine glycans are attached at residues threonine 812 and threonine 813. A glycan (N-linked (Glc...) asparagine) is linked at asparagine 815. Residues 829–849 (IPGFGVGVALVAVLGAALLAL) traverse the membrane as a helical segment. The short motif at 830-832 (PGF) is the PGF sorting signal element.

It belongs to the halobacterial S-layer protein family. Post-translationally, N-linked glycan at Asn-36 consists of a glycosaminoglycan chain, constructed by a repeating sulfated pentasaccharide block composed of GlcNAc, GalNAc, Gal, GalA, 3-O-methyl-GalA, and sulfate in the molar ratio of 1:1:1:1:1:2; the other N-linked glycans contain Glc, GlcA and IdoA. O-linked glycans consist of Glc-Gal disaccharides. In terms of processing, the C-terminus (residues 770-778) is lipidated with diphytanylglyceryl phosphate. Post-translationally, cleaved by the archaeosortase ArtA at the C-terminus, with removal of a short hydrophobic segment.

The protein resides in the secreted. It localises to the cell wall. The protein localises to the S-layer. It is found in the cell membrane. Functionally, S-layer protein. The S-layer is a paracrystalline mono-layered assembly of proteins which coat the surface of the cell. This chain is Cell surface glycoprotein (csg), found in Halobacterium salinarum (strain ATCC 29341 / DSM 671 / R1).